The sequence spans 480 residues: Protein nucleotidyltransferase YdiU (480 aa).

Residues G86, G88, R89, K109, D121, G122, R172, and R179 each coordinate ATP. The active-site Proton acceptor is the D248. 2 residues coordinate Mg(2+): N249 and D258. An ATP-binding site is contributed by D258.

This sequence belongs to the SELO family. Mg(2+) is required as a cofactor. Mn(2+) serves as cofactor.

It catalyses the reaction L-seryl-[protein] + ATP = 3-O-(5'-adenylyl)-L-seryl-[protein] + diphosphate. It carries out the reaction L-threonyl-[protein] + ATP = 3-O-(5'-adenylyl)-L-threonyl-[protein] + diphosphate. The enzyme catalyses L-tyrosyl-[protein] + ATP = O-(5'-adenylyl)-L-tyrosyl-[protein] + diphosphate. The catalysed reaction is L-histidyl-[protein] + UTP = N(tele)-(5'-uridylyl)-L-histidyl-[protein] + diphosphate. It catalyses the reaction L-seryl-[protein] + UTP = O-(5'-uridylyl)-L-seryl-[protein] + diphosphate. It carries out the reaction L-tyrosyl-[protein] + UTP = O-(5'-uridylyl)-L-tyrosyl-[protein] + diphosphate. Nucleotidyltransferase involved in the post-translational modification of proteins. It can catalyze the addition of adenosine monophosphate (AMP) or uridine monophosphate (UMP) to a protein, resulting in modifications known as AMPylation and UMPylation. This is Protein nucleotidyltransferase YdiU from Salmonella arizonae (strain ATCC BAA-731 / CDC346-86 / RSK2980).